We begin with the raw amino-acid sequence, 170 residues long: Cyclic pyranopterin monophosphate synthase (170 aa).

Residues leucine 89 to histidine 91 and methionine 125 to glutamate 126 contribute to the substrate site. Aspartate 140 is an active-site residue.

Belongs to the MoaC family. Homohexamer; trimer of dimers.

The catalysed reaction is (8S)-3',8-cyclo-7,8-dihydroguanosine 5'-triphosphate = cyclic pyranopterin phosphate + diphosphate. Its pathway is cofactor biosynthesis; molybdopterin biosynthesis. Functionally, catalyzes the conversion of (8S)-3',8-cyclo-7,8-dihydroguanosine 5'-triphosphate to cyclic pyranopterin monophosphate (cPMP). This chain is Cyclic pyranopterin monophosphate synthase, found in Streptomyces avermitilis (strain ATCC 31267 / DSM 46492 / JCM 5070 / NBRC 14893 / NCIMB 12804 / NRRL 8165 / MA-4680).